The sequence spans 231 residues: GTP-binding protein RHO3 (231 aa).

23–30 (GDGACGKT) contacts GTP. Positions 45 to 53 (YEPTVFENY) match the Effector region motif. GTP is bound by residues 70–74 (DTAGQ) and 128–131 (LKCD). Polar residues predominate over residues 139-150 (SNAITPNNIQQD). The disordered stretch occupies residues 139 to 165 (SNAITPNNIQQDNSVSNDNGNNINSTS). Residues 151-165 (NSVSNDNGNNINSTS) are compositionally biased toward low complexity. Cysteine methyl ester is present on Cys228. The S-farnesyl cysteine moiety is linked to residue Cys228. A propeptide spans 229–231 (TIM) (removed in mature form).

This sequence belongs to the small GTPase superfamily. Rho family. In terms of assembly, interacts with TOS7.

The protein resides in the cell membrane. Its activity is regulated as follows. Activity is positively regulated by the GTPase activating protein (GAP) RGD1. Plays an important role in cell growth. Required to keep the uninucleated state. Modulates morphogenesis during bud growth via directing organization of the actin cytoskeleton and the position of the secretory machinery for exocytosis. The chain is GTP-binding protein RHO3 from Saccharomyces cerevisiae (strain ATCC 204508 / S288c) (Baker's yeast).